A 141-amino-acid polypeptide reads, in one-letter code: MAKKVVGMIKLQLPAGKASPAPPVGPALGQHGVNIMGFCKEFNAKTANQAGLIIPVVITVYQDRSFSFILKTPPAAVLLKKAAGIESGSGVPNKTKVAKVTKDQIREIAETKMPDLNAGSIETAMSMIAGTARSMGITVEE.

The protein belongs to the universal ribosomal protein uL11 family. In terms of assembly, part of the ribosomal stalk of the 50S ribosomal subunit. Interacts with L10 and the large rRNA to form the base of the stalk. L10 forms an elongated spine to which L12 dimers bind in a sequential fashion forming a multimeric L10(L12)X complex. One or more lysine residues are methylated.

Forms part of the ribosomal stalk which helps the ribosome interact with GTP-bound translation factors. The polypeptide is Large ribosomal subunit protein uL11 (Clostridium botulinum (strain Kyoto / Type A2)).